Reading from the N-terminus, the 517-residue chain is Arp2/3 complex-activating protein rickA (517 aa).

Disordered regions lie at residues 313–441 (LENN…SKPA) and 461–517 (KVSD…SFVR). Composition is skewed to pro residues over residues 319–340 (PPSP…PSPL) and 347–378 (SSPP…PPMA). Positions 406-423 (DTSDLMREIAGPKKLKKV) constitute a WH2 domain. The tract at residues 444–477 (VNALSGLESIFARRAVIKVSDSSSSESDSGNWSD) is central and acidic domains. The segment covering 463–479 (SDSSSSESDSGNWSDVS) has biased composition (low complexity). Residues 500-517 (THAQKINNRNSQNPSFVR) are compositionally biased toward polar residues.

As to quaternary structure, homodimer.

It is found in the cell surface. Its function is as follows. Recruits and activates the Arp2/3 complex, which in turn leads to actin polymerization, promoting Rickettsia motility during infection. The protein is Arp2/3 complex-activating protein rickA (rickA) of Rickettsia conorii (strain ATCC VR-613 / Malish 7).